The primary structure comprises 223 residues: Small ribosomal subunit protein uS3 (223 aa).

Residues 40–108 (IRELVHRELP…KVHLNIQEIR (69 aa)) form the KH type-2 domain.

Belongs to the universal ribosomal protein uS3 family. Part of the 30S ribosomal subunit. Forms a tight complex with proteins S10 and S14.

Binds the lower part of the 30S subunit head. Binds mRNA in the 70S ribosome, positioning it for translation. The sequence is that of Small ribosomal subunit protein uS3 from Thermomicrobium roseum (strain ATCC 27502 / DSM 5159 / P-2).